The chain runs to 127 residues: Ribonuclease P protein component (127 aa).

It belongs to the RnpA family. Consists of a catalytic RNA component (M1 or rnpB) and a protein subunit.

It carries out the reaction Endonucleolytic cleavage of RNA, removing 5'-extranucleotides from tRNA precursor.. Functionally, RNaseP catalyzes the removal of the 5'-leader sequence from pre-tRNA to produce the mature 5'-terminus. It can also cleave other RNA substrates such as 4.5S RNA. The protein component plays an auxiliary but essential role in vivo by binding to the 5'-leader sequence and broadening the substrate specificity of the ribozyme. The protein is Ribonuclease P protein component of Rippkaea orientalis (strain PCC 8801 / RF-1) (Cyanothece sp. (strain PCC 8801)).